The chain runs to 457 residues: Putative transposase y4bF (457 aa).

Residues 128–313 enclose the Integrase catalytic domain; the sequence is TFHQPRLRRE…RPLNLAPDRL (186 aa). The segment at 406 to 440 is disordered; that stretch reads QDERPAPKVRTNSEKNGYTPRGRKPGKRTDFMNDP.

In Sinorhizobium fredii (strain NBRC 101917 / NGR234), this protein is Putative transposase y4bF.